A 180-amino-acid chain; its full sequence is UPF0227 protein YcfP (180 aa).

Belongs to the UPF0227 family.

The chain is UPF0227 protein YcfP from Salmonella paratyphi A (strain ATCC 9150 / SARB42).